Reading from the N-terminus, the 953-residue chain is UPF0746 protein DDB_G0281301 (953 aa).

The segment covering 1-10 has biased composition (basic and acidic residues); it reads MVNNKRKEIE. The interval 1–23 is disordered; the sequence is MVNNKRKEIENQENDNNDDNDGL. Acidic residues predominate over residues 11 to 21; sequence NQENDNNDDND. The SAP domain occupies 35–69; the sequence is YDSIRSKELQTIAKSLGLPIIGKKQEIYKRIEGYF.

It belongs to the UPF0746 family.

The protein is UPF0746 protein DDB_G0281301 of Dictyostelium discoideum (Social amoeba).